Here is a 314-residue protein sequence, read N- to C-terminus: ATP synthase gamma chain (314 aa).

The protein belongs to the ATPase gamma chain family. In terms of assembly, F-type ATPases have 2 components, CF(1) - the catalytic core - and CF(0) - the membrane proton channel. CF(1) has five subunits: alpha(3), beta(3), gamma(1), delta(1), epsilon(1). CF(0) has three main subunits: a, b and c.

The protein resides in the cellular thylakoid membrane. Produces ATP from ADP in the presence of a proton gradient across the membrane. The gamma chain is believed to be important in regulating ATPase activity and the flow of protons through the CF(0) complex. This chain is ATP synthase gamma chain, found in Picosynechococcus sp. (strain ATCC 27264 / PCC 7002 / PR-6) (Agmenellum quadruplicatum).